The following is a 190-amino-acid chain: Guanylate kinase (190 aa).

The 181-residue stretch at 8-188 (GRLVILAGPS…AVKAIEDVLL (181 aa)) folds into the Guanylate kinase-like domain. 15 to 22 (GPSAVGKS) provides a ligand contact to ATP.

Belongs to the guanylate kinase family.

The protein resides in the cytoplasm. The enzyme catalyses GMP + ATP = GDP + ADP. Its function is as follows. Essential for recycling GMP and indirectly, cGMP. In Corynebacterium glutamicum (strain ATCC 13032 / DSM 20300 / JCM 1318 / BCRC 11384 / CCUG 27702 / LMG 3730 / NBRC 12168 / NCIMB 10025 / NRRL B-2784 / 534), this protein is Guanylate kinase.